The chain runs to 181 residues: Probable GTP-binding protein EngB (181 aa).

The EngB-type G domain occupies 18 to 181 (PKNEICFVGR…LQDLVNNLFN (164 aa)). Residues 26-33 (GRSNVGKS), 52-56 (GKTKL), 70-73 (DLPG), 137-140 (TKRD), and 164-166 (VSI) contribute to the GTP site. Mg(2+) contacts are provided by S33 and T54.

It belongs to the TRAFAC class TrmE-Era-EngA-EngB-Septin-like GTPase superfamily. EngB GTPase family. Requires Mg(2+) as cofactor.

Necessary for normal cell division and for the maintenance of normal septation. This is Probable GTP-binding protein EngB from Mycoplasma mobile (strain ATCC 43663 / 163K / NCTC 11711) (Mesomycoplasma mobile).